The following is a 608-amino-acid chain: Serine/threonine-protein kinase SSN3 (608 aa).

A disordered region spans residues 1-72 (MSYSSASFRK…PGTVGTRTSI (72 aa)). A compositionally biased stretch (low complexity) spans 17–47 (SQPSQTTTTTTSANQPQSQSQQQPLQQSQQQ). The span at 49-59 (LHMKPNPHIPH) shows a compositional bias: basic residues. A Protein kinase domain is found at 104 to 492 (YQIMGYIAAG…ADQALLHPYF (389 aa)). ATP contacts are provided by residues 110–118 (IAAGTYGKV) and K182. The active-site Proton acceptor is D307. The disordered stretch occupies residues 523 to 608 (MTTAANNNNN…LPGGIRKKRG (86 aa)). Positions 528-583 (NNNNNNNNNNNNNNNNNNNNNNNNNNNSGHQLSQQQNVQIQQVHQMQQQIHSQQLQ) are enriched in low complexity.

Belongs to the protein kinase superfamily. CMGC Ser/Thr protein kinase family. CDC2/CDKX subfamily. In terms of assembly, component of the SRB8-11 complex, a regulatory module of the Mediator complex. The cofactor is Mg(2+).

The protein resides in the nucleus. The catalysed reaction is L-seryl-[protein] + ATP = O-phospho-L-seryl-[protein] + ADP + H(+). The enzyme catalyses L-threonyl-[protein] + ATP = O-phospho-L-threonyl-[protein] + ADP + H(+). It catalyses the reaction [DNA-directed RNA polymerase] + ATP = phospho-[DNA-directed RNA polymerase] + ADP + H(+). In terms of biological role, component of the SRB8-11 complex. The SRB8-11 complex is a regulatory module of the Mediator complex which is itself involved in regulation of basal and activated RNA polymerase II-dependent transcription. The SRB8-11 complex may be involved in the transcriptional repression of a subset of genes regulated by Mediator. It may inhibit the association of the Mediator complex with RNA polymerase II to form the holoenzyme complex. The SRB8-11 complex phosphorylates the C-terminal domain (CTD) of the largest subunit of RNA polymerase II. This chain is Serine/threonine-protein kinase SSN3 (SSN3), found in Candida albicans (strain SC5314 / ATCC MYA-2876) (Yeast).